A 165-amino-acid chain; its full sequence is MSHPALTQLRALRYCKEIPALDPQLLDWLLLEDSMTKRFEQQGKTVSVTMIREGFVEQNEIPEELPLLPKESRYWLREILLCADGEPWLAGRTVVPVSTLSGPELALQKLGKTPLGRYLFTSSTLTRDFIEIGRDAGLWGRRSRLRLSGKPLLLTELFLPASPLY.

Substrate-binding residues include M35, R77, L115, and E156.

The protein belongs to the UbiC family. Monomer.

It is found in the cytoplasm. It carries out the reaction chorismate = 4-hydroxybenzoate + pyruvate. It participates in cofactor biosynthesis; ubiquinone biosynthesis. Removes the pyruvyl group from chorismate, with concomitant aromatization of the ring, to provide 4-hydroxybenzoate (4HB) for the ubiquinone pathway. The protein is Chorismate pyruvate-lyase of Escherichia coli (strain K12 / MC4100 / BW2952).